We begin with the raw amino-acid sequence, 373 residues long: UDP-N-acetylglucosamine--N-acetylmuramyl-(pentapeptide) pyrophosphoryl-undecaprenol N-acetylglucosamine transferase (373 aa).

UDP-N-acetyl-alpha-D-glucosamine contacts are provided by residues 16-18 (TGG), Asn-128, Arg-164, Ser-192, Ile-250, and Gln-295.

Belongs to the glycosyltransferase 28 family. MurG subfamily.

It is found in the cell inner membrane. It carries out the reaction di-trans,octa-cis-undecaprenyl diphospho-N-acetyl-alpha-D-muramoyl-L-alanyl-D-glutamyl-meso-2,6-diaminopimeloyl-D-alanyl-D-alanine + UDP-N-acetyl-alpha-D-glucosamine = di-trans,octa-cis-undecaprenyl diphospho-[N-acetyl-alpha-D-glucosaminyl-(1-&gt;4)]-N-acetyl-alpha-D-muramoyl-L-alanyl-D-glutamyl-meso-2,6-diaminopimeloyl-D-alanyl-D-alanine + UDP + H(+). Its pathway is cell wall biogenesis; peptidoglycan biosynthesis. Functionally, cell wall formation. Catalyzes the transfer of a GlcNAc subunit on undecaprenyl-pyrophosphoryl-MurNAc-pentapeptide (lipid intermediate I) to form undecaprenyl-pyrophosphoryl-MurNAc-(pentapeptide)GlcNAc (lipid intermediate II). This chain is UDP-N-acetylglucosamine--N-acetylmuramyl-(pentapeptide) pyrophosphoryl-undecaprenol N-acetylglucosamine transferase, found in Paraburkholderia phymatum (strain DSM 17167 / CIP 108236 / LMG 21445 / STM815) (Burkholderia phymatum).